A 132-amino-acid polypeptide reads, in one-letter code: Agouti-signaling protein (132 aa).

Positions 1 to 22 (MDVTRLLLATLLVFLCFFTADS) are cleaved as a signal peptide. The N-linked (GlcNAc...) asparagine glycan is linked to asparagine 39. Residues 62–85 (ISRKEAEKKRSSKKEASMKTVARP) form a disordered region. Positions 63–78 (SRKEAEKKRSSKKEAS) are enriched in basic and acidic residues. Intrachain disulfides connect cysteine 93-cysteine 108, cysteine 100-cysteine 114, cysteine 107-cysteine 125, cysteine 111-cysteine 132, and cysteine 116-cysteine 123. In terms of domain architecture, Agouti spans 93 to 132 (CVATRNSCKPPAPACCDPCASCQCRFFRSACSCRVLSLNC).

Its subcellular location is the secreted. Functionally, involved in the regulation of melanogenesis. The binding of ASP to MC1R precludes alpha-MSH initiated signaling and thus blocks production of cAMP, leading to a down-regulation of eumelanogenesis (brown/black pigment) and thus increasing synthesis of pheomelanin (yellow/red pigment). The sequence is that of Agouti-signaling protein (ASIP) from Pongo pygmaeus (Bornean orangutan).